We begin with the raw amino-acid sequence, 201 residues long: Dephospho-CoA kinase (201 aa).

A DPCK domain is found at 4–201 (AFFVTASIAC…VIQEISKGKM (198 aa)). ATP is bound at residue 12–17 (ACGKST).

The protein belongs to the CoaE family.

Its subcellular location is the cytoplasm. It carries out the reaction 3'-dephospho-CoA + ATP = ADP + CoA + H(+). It participates in cofactor biosynthesis; coenzyme A biosynthesis; CoA from (R)-pantothenate: step 5/5. Catalyzes the phosphorylation of the 3'-hydroxyl group of dephosphocoenzyme A to form coenzyme A. The sequence is that of Dephospho-CoA kinase from Campylobacter jejuni (strain RM1221).